The following is a 304-amino-acid chain: Oxygen-dependent coproporphyrinogen-III oxidase (304 aa).

Ser94 contributes to the substrate binding site. Residues His98 and His108 each coordinate a divalent metal cation. Residue His108 is the Proton donor of the active site. 110–112 (NVR) is a binding site for substrate. A divalent metal cation-binding residues include His147 and His177. The important for dimerization stretch occupies residues 242–277 (YVEFNLVYDRGTLFGLQSGGRTESILMSLPPVAHWR). 260–262 (GGR) is a substrate binding site.

It belongs to the aerobic coproporphyrinogen-III oxidase family. Homodimer. It depends on a divalent metal cation as a cofactor.

Its subcellular location is the cytoplasm. The enzyme catalyses coproporphyrinogen III + O2 + 2 H(+) = protoporphyrinogen IX + 2 CO2 + 2 H2O. The protein operates within porphyrin-containing compound metabolism; protoporphyrin-IX biosynthesis; protoporphyrinogen-IX from coproporphyrinogen-III (O2 route): step 1/1. Functionally, involved in the heme biosynthesis. Catalyzes the aerobic oxidative decarboxylation of propionate groups of rings A and B of coproporphyrinogen-III to yield the vinyl groups in protoporphyrinogen-IX. This is Oxygen-dependent coproporphyrinogen-III oxidase from Methylococcus capsulatus (strain ATCC 33009 / NCIMB 11132 / Bath).